The primary structure comprises 187 residues: UPF0301 protein YqgE (187 aa).

Belongs to the UPF0301 (AlgH) family.

The chain is UPF0301 protein YqgE from Salmonella paratyphi A (strain ATCC 9150 / SARB42).